The following is a 155-amino-acid chain: Small ribosomal subunit protein uS7 (155 aa).

This sequence belongs to the universal ribosomal protein uS7 family. As to quaternary structure, part of the 30S ribosomal subunit. Contacts proteins S9 and S11.

Functionally, one of the primary rRNA binding proteins, it binds directly to 16S rRNA where it nucleates assembly of the head domain of the 30S subunit. Is located at the subunit interface close to the decoding center, probably blocks exit of the E-site tRNA. The polypeptide is Small ribosomal subunit protein uS7 (Corynebacterium efficiens (strain DSM 44549 / YS-314 / AJ 12310 / JCM 11189 / NBRC 100395)).